A 492-amino-acid chain; its full sequence is Sestrin-1 (492 aa).

The interval 71 to 252 (FADSFAALGR…ICDITNGNHS (182 aa)) is N-terminal domain; may mediate the alkylhydroperoxide reductase activity. Cys130 functions as the Cysteine sulfenic acid (-SOH) intermediate in the catalytic mechanism. A phosphoserine mark is found at Ser293 and Ser314. A C-terminal domain; mediates TORC1 regulation region spans residues 321 to 492 (PARDVSRHFE…ALRAITRYMT (172 aa)). Residues 386–389 (TYNT), Thr398, and Glu463 each bind L-leucine.

The protein belongs to the sestrin family. As to quaternary structure, interacts with the GATOR2 complex which is composed of MIOS, SEC13, SEH1L, WDR24 and WDR59; the interaction is negatively regulated by leucine. Interacts with RRAGA, RRAGB, RRAGC and RRAGD; may function as a guanine nucleotide dissociation inhibitor for RRAGs and regulate them. Interacts with KEAP1, RBX1 and SQSTM1; in the SQSTM1-dependent autophagic degradation of KEAP1. May interact with PRDX1. Highly expressed in heart and also detected in liver and skeletal muscles (at protein level).

It localises to the nucleus. The protein localises to the cytoplasm. The enzyme catalyses a hydroperoxide + L-cysteinyl-[protein] = S-hydroxy-L-cysteinyl-[protein] + an alcohol. Its function is as follows. Functions as an intracellular leucine sensor that negatively regulates the TORC1 signaling pathway through the GATOR complex. In absence of leucine, binds the GATOR subcomplex GATOR2 and prevents TORC1 signaling. Binding of leucine to SESN2 disrupts its interaction with GATOR2 thereby activating the TORC1 signaling pathway. This stress-inducible metabolic regulator may also play a role in protection against oxidative and genotoxic stresses. May positively regulate the transcription by NFE2L2 of genes involved in the response to oxidative stress by facilitating the SQSTM1-mediated autophagic degradation of KEAP1. Moreover, may prevent the accumulation of reactive oxygen species (ROS) through the alkylhydroperoxide reductase activity born by the N-terminal domain of the protein. Was originally reported to contribute to oxidative stress resistance by reducing PRDX1. However, this could not be confirmed. In Mus musculus (Mouse), this protein is Sestrin-1.